Here is a 189-residue protein sequence, read N- to C-terminus: Adenylate kinase (189 aa).

Residue 10-15 (AAGKGT) participates in ATP binding. The NMP stretch occupies residues 30–59 (STGDMLRAAIASGSELGQKVKGVLDRGELV). AMP-binding positions include Thr-31, Arg-36, 57–59 (ELV), 85–88 (GFPR), and Gln-92. The LID stretch occupies residues 126-136 (KRFAEQGRPDD). Residue Arg-127 coordinates ATP. Positions 133 and 144 each coordinate AMP. Ala-172 contacts ATP.

It belongs to the adenylate kinase family. Monomer.

Its subcellular location is the cytoplasm. The catalysed reaction is AMP + ATP = 2 ADP. It functions in the pathway purine metabolism; AMP biosynthesis via salvage pathway; AMP from ADP: step 1/1. In terms of biological role, catalyzes the reversible transfer of the terminal phosphate group between ATP and AMP. Plays an important role in cellular energy homeostasis and in adenine nucleotide metabolism. The polypeptide is Adenylate kinase (Caulobacter sp. (strain K31)).